Here is a 21-residue protein sequence, read N- to C-terminus: Neuropeptide gamma (21 aa).

A disordered region spans residues 1 to 21; the sequence is SSANPQITRKRHKINSFVGLM. Residue methionine 21 is modified to Methionine amide.

Belongs to the tachykinin family.

The protein localises to the secreted. Its function is as follows. Tachykinins are active peptides which excite neurons, evoke behavioral responses, and contract (directly or indirectly) many smooth muscles. Is a potent vasoconstrictor and secretagogue that plays a regulatory role in the central control of ventilation, in particular, the heart rate variability (HRV). The chain is Neuropeptide gamma from Oncorhynchus mykiss (Rainbow trout).